A 206-amino-acid polypeptide reads, in one-letter code: Large ribosomal subunit protein bL17 (206 aa).

Residues 130–141 (ERARGTRFEARR) are compositionally biased toward basic and acidic residues. The tract at residues 130–206 (ERARGTRFEA…SGAGEQNSAN (77 aa)) is disordered. Low complexity-rich tracts occupy residues 160–181 (TAAAVAVEAAEPAETPAEGAAG) and 189–200 (DDSGIGDDSGAG).

This sequence belongs to the bacterial ribosomal protein bL17 family. Part of the 50S ribosomal subunit. Contacts protein L32.

In Frankia casuarinae (strain DSM 45818 / CECT 9043 / HFP020203 / CcI3), this protein is Large ribosomal subunit protein bL17.